A 1055-amino-acid polypeptide reads, in one-letter code: Leukotoxin (1055 aa).

A coiled-coil region spans residues 11–49 (QQAAQFANSVADRAKENIDAAKEQLQKALDKLGKTGKKL). 2 cholesterol recognition/amino acid consensus (CRAC) region regions span residues 334-340 (LEEYSKR) and 502-506 (VDYLK). Hemolysin-type calcium-binding repeat units lie at residues 721 to 738 (IGST…NDVF), 739 to 756 (HGHD…DDRL), 757 to 774 (YGDN…NDKL), 775 to 792 (YGGA…NNYL), 793 to 810 (DGGE…SDIL), 811 to 828 (RGGS…DDLL), and 829 to 846 (DGGE…NDIY). The segment at 795-815 (GEGDDHLEGGNGSDILRGGSG) is disordered. The disordered stretch occupies residues 990–1009 (KGKSSSLMSSSRSSSMLTQK). The segment covering 993 to 1006 (SSSLMSSSRSSSML) has biased composition (low complexity).

Belongs to the RTX prokaryotic toxin (TC 1.C.11) family. In terms of assembly, interacts specifically with the superoxide dismutase [Cu-Zn]. This interaction may protect LtxA from reactive oxygen species and reactive nitrogen species produced by host inflammatory cells during disease. Interacts with the human leukocyte adhesion glycoprotein LFA-1 (ITGAL-ITGB2). In terms of processing, acylated at Lys-562 and Lys-687 by LtxC. This modification is required for full activity. Isolated methyl esters contain palmitoyl and palmitolyl fatty acyl groups with smaller quantities of myristic and stearic fatty acids.

It localises to the cell outer membrane. The protein resides in the secreted. Functionally, virulence factor that plays an important role in immune evasion. Lyses human lymphocytes and monocytes. Binds to the LFA-1 integrin on the surface of the host cell and to cholesterol-containing membranes, which probably results in large LtxA-LFA-1 clusters in lipid rafts. Also shows beta-hemolytic activity on certain types of growth media. This Aggregatibacter actinomycetemcomitans (Actinobacillus actinomycetemcomitans) protein is Leukotoxin.